A 188-amino-acid polypeptide reads, in one-letter code: Protein GrpE (188 aa).

The segment covering 1–16 has biased composition (basic and acidic residues); the sequence is MEERNEQVVEEVKEAQ. The disordered stretch occupies residues 1–31; that stretch reads MEERNEQVVEEVKEAQVEEAVTPENSEETVE.

The protein belongs to the GrpE family. Homodimer.

The protein resides in the cytoplasm. Participates actively in the response to hyperosmotic and heat shock by preventing the aggregation of stress-denatured proteins, in association with DnaK and GrpE. It is the nucleotide exchange factor for DnaK and may function as a thermosensor. Unfolded proteins bind initially to DnaJ; upon interaction with the DnaJ-bound protein, DnaK hydrolyzes its bound ATP, resulting in the formation of a stable complex. GrpE releases ADP from DnaK; ATP binding to DnaK triggers the release of the substrate protein, thus completing the reaction cycle. Several rounds of ATP-dependent interactions between DnaJ, DnaK and GrpE are required for fully efficient folding. This is Protein GrpE from Bacillus anthracis.